A 273-amino-acid polypeptide reads, in one-letter code: MEILRTTDELRKFRAAVSQKVGFVPTMGALHAGHISLIKRCKDENEITIVSTFVNPTQFLAGEDLDKYPKNEAADIKICENLEVDAIFIPKADEFYEDDEPKISAPKSLSAILEGATRPGHFDGVLQVLNKLFNLTKPKNVYMGKKDAQQLTIVRNMVQNFFMDINVNACEIVRENDGLALSSRNIYLDEEQKMLALKLSRSLLKAKNLVDASETDINVIKTAMLKILEPLKVDYIAFVDRNFKEISKIEVGNSIILVAAYVDKTRLIDNIWL.

27–34 (MGALHAGH) is an ATP binding site. H34 functions as the Proton donor in the catalytic mechanism. (R)-pantoate is bound at residue Q58. Q58 serves as a coordination point for beta-alanine. 144–147 (GKKD) lines the ATP pocket. Q150 lines the (R)-pantoate pocket. ATP is bound by residues V173 and 181–184 (LSSR).

The protein belongs to the pantothenate synthetase family. Homodimer.

It localises to the cytoplasm. It catalyses the reaction (R)-pantoate + beta-alanine + ATP = (R)-pantothenate + AMP + diphosphate + H(+). The protein operates within cofactor biosynthesis; (R)-pantothenate biosynthesis; (R)-pantothenate from (R)-pantoate and beta-alanine: step 1/1. Catalyzes the condensation of pantoate with beta-alanine in an ATP-dependent reaction via a pantoyl-adenylate intermediate. The polypeptide is Pantothenate synthetase (Campylobacter hominis (strain ATCC BAA-381 / DSM 21671 / CCUG 45161 / LMG 19568 / NCTC 13146 / CH001A)).